Consider the following 485-residue polypeptide: D-alanine--D-alanyl carrier protein ligase (485 aa).

T144–S145 is a binding site for ATP. D189 contributes to the D-alanine binding site. N284–T289 is an ATP binding site. Residue V293 participates in D-alanine binding. ATP contacts are provided by D365 and K473. Residue K473 participates in D-alanine binding.

This sequence belongs to the ATP-dependent AMP-binding enzyme family. DltA subfamily.

It localises to the cytoplasm. The catalysed reaction is holo-[D-alanyl-carrier protein] + D-alanine + ATP = D-alanyl-[D-alanyl-carrier protein] + AMP + diphosphate. Its pathway is cell wall biogenesis; lipoteichoic acid biosynthesis. Catalyzes the first step in the D-alanylation of lipoteichoic acid (LTA), the activation of D-alanine and its transfer onto the D-alanyl carrier protein (Dcp) DltC. In an ATP-dependent two-step reaction, forms a high energy D-alanyl-AMP intermediate, followed by transfer of the D-alanyl residue as a thiol ester to the phosphopantheinyl prosthetic group of the Dcp. D-alanylation of LTA plays an important role in modulating the properties of the cell wall in Gram-positive bacteria, influencing the net charge of the cell wall. This Staphylococcus haemolyticus (strain JCSC1435) protein is D-alanine--D-alanyl carrier protein ligase.